The primary structure comprises 357 residues: SNF1-related protein kinase regulatory subunit gamma-like PV42b (357 aa).

CBS domains lie at 16 to 97 (MIDK…DGES), 113 to 185 (HCPE…SSQL), 198 to 273 (AIHN…WLPL), and 293 to 351 (STPG…ALLS).

This sequence belongs to the 5'-AMP-activated protein kinase gamma subunit family. In terms of tissue distribution, expressed highly in rosette leaves, cauline leaves, open flowers, developing siliques and dry seeds, but at a low level in stems and floral buds.

Plays redundant role with PV42a in regulating male gametogenesis and pollen tube guidance. This chain is SNF1-related protein kinase regulatory subunit gamma-like PV42b (PV42B), found in Arabidopsis thaliana (Mouse-ear cress).